The primary structure comprises 567 residues: Geranylgeranyl transferase type-2 subunit alpha (567 aa).

PFTA repeat units lie at residues 44–78 (LDES…QLET), 88–122 (LVKA…RLPE), 124–158 (NWTR…QAAV), 159–193 (PPAE…QLHP), 207–241 (VLLK…RADP), and 363–397 (VLQS…ALDP). The residue at position 98 (Ser98) is a Phosphoserine. LRR repeat units follow at residues 442–463 (EVRV…EQLL), 464–486 (LVTH…AALR), 487–508 (CLEV…TNLP), 509–530 (RLQE…QPLA), and 534–555 (RLVL…LEQL).

This sequence belongs to the protein prenyltransferase subunit alpha family. As to quaternary structure, heterotrimer composed of RABGGTA, RABGGTB and CHM; within this trimer, RABGGTA and RABGGTB form the catalytic component B, while CHM (component A) mediates peptide substrate binding. The Rab GGTase dimer (RGGT) interacts with CHM (component A) prior to Rab protein binding; the association is stabilized by geranylgeranyl pyrophosphate (GGpp). The CHM:RGGT:Rab complex is destabilized by GGpp. Interacts with non-phosphorylated form of RAB8A; phosphorylation of RAB8A at 'Thr-72' disrupts this interaction.

The enzyme catalyses geranylgeranyl diphosphate + L-cysteinyl-[protein] = S-geranylgeranyl-L-cysteinyl-[protein] + diphosphate. The enzymatic reaction requires the aid of a Rab escort protein (also called component A), such as CHM. In terms of biological role, catalyzes the transfer of a geranylgeranyl moiety from geranylgeranyl diphosphate to both cysteines of Rab proteins with the C-terminal sequence -XXCC, -XCXC and -CCXX, such as RAB1A, RAB3A, RAB5A and RAB7A. The chain is Geranylgeranyl transferase type-2 subunit alpha (RABGGTA) from Homo sapiens (Human).